We begin with the raw amino-acid sequence, 197 residues long: Protein jagunal (197 aa).

Residues 1-39 (MATRGGPMVAGTDGNDFEFRQRVAGTYQISLLNKSRLKY) are Cytoplasmic-facing. Residues 40–60 (CIFFHALLFFVMLAKLTSDIL) form a helical membrane-spanning segment. Residues 61 to 78 (DHLDIFVLEIEELEVPPP) are Lumenal-facing. A helical transmembrane segment spans residues 79-99 (LWWEYVWAASLLTSFLGLSAA). Topologically, residues 100-109 (RGNKVREMQK) are cytoplasmic. A helical membrane pass occupies residues 110–130 (YMVAILLFAILPLFYCFAYYF). Topologically, residues 131–159 (SDVWEFATLDKSVELDETDIFVWRGYPYG) are lumenal. The helical transmembrane segment at 160 to 180 (VFWYAFCFVGFQVHGFTLYFA) threads the bilayer. The Cytoplasmic portion of the chain corresponds to 181 to 197 (YNLVKAWKARTATRKFQ).

Belongs to the jagunal family.

It localises to the endoplasmic reticulum membrane. In terms of biological role, required for endoplasmic reticulum organization and proper vesicular traffic during vitellogenesis. Required for oocyte and bristle growth. The chain is Protein jagunal from Drosophila melanogaster (Fruit fly).